A 429-amino-acid polypeptide reads, in one-letter code: Serine hydroxymethyltransferase (429 aa).

Residues leucine 130 and 134-136 (GHL) contribute to the (6S)-5,6,7,8-tetrahydrofolate site. An N6-(pyridoxal phosphate)lysine modification is found at lysine 239.

This sequence belongs to the SHMT family. As to quaternary structure, homodimer. Pyridoxal 5'-phosphate serves as cofactor.

It is found in the cytoplasm. It catalyses the reaction (6R)-5,10-methylene-5,6,7,8-tetrahydrofolate + glycine + H2O = (6S)-5,6,7,8-tetrahydrofolate + L-serine. Its pathway is one-carbon metabolism; tetrahydrofolate interconversion. It functions in the pathway amino-acid biosynthesis; glycine biosynthesis; glycine from L-serine: step 1/1. Catalyzes the reversible interconversion of serine and glycine with tetrahydrofolate (THF) serving as the one-carbon carrier. This reaction serves as the major source of one-carbon groups required for the biosynthesis of purines, thymidylate, methionine, and other important biomolecules. Also exhibits THF-independent aldolase activity toward beta-hydroxyamino acids, producing glycine and aldehydes, via a retro-aldol mechanism. This is Serine hydroxymethyltransferase from Phenylobacterium zucineum (strain HLK1).